Reading from the N-terminus, the 245-residue chain is tRNA (guanine-N(1)-)-methyltransferase (245 aa).

S-adenosyl-L-methionine-binding positions include Gly113 and 133-138 (IGDYVL).

The protein belongs to the RNA methyltransferase TrmD family. In terms of assembly, homodimer.

The protein resides in the cytoplasm. The enzyme catalyses guanosine(37) in tRNA + S-adenosyl-L-methionine = N(1)-methylguanosine(37) in tRNA + S-adenosyl-L-homocysteine + H(+). Functionally, specifically methylates guanosine-37 in various tRNAs. This Histophilus somni (strain 129Pt) (Haemophilus somnus) protein is tRNA (guanine-N(1)-)-methyltransferase.